We begin with the raw amino-acid sequence, 269 residues long: Arginine and glutamate-rich protein 1-B (269 aa).

Positions Met-1–Ser-57 are enriched in basic residues. The necessary and sufficient for RNA binding stretch occupies residues Met-1 to Arg-70. Disordered regions lie at residues Met-1 to Gln-109 and Arg-233 to Glu-269. Composition is skewed to basic and acidic residues over residues Ser-64 to Ile-80, Ser-89 to Gln-109, and Arg-233 to Lys-249. Positions Ala-71–Glu-269 are necessary and sufficient for transcriptional regulation.

Belongs to the ARGLU1 family.

It localises to the nucleus. It is found in the nucleus speckle. Its subcellular location is the chromosome. Functionally, dual function regulator of gene expression; regulator of transcription and modulator of alternative splicing. General coactivator of nuclear receptor-induced gene expression. The chain is Arginine and glutamate-rich protein 1-B (arglu1b) from Danio rerio (Zebrafish).